A 326-amino-acid chain; its full sequence is Holliday junction branch migration complex subunit RuvB (326 aa).

Positions 1–180 (MKSISCGKEY…FGIPLHLEFY (180 aa)) are large ATPase domain (RuvB-L). Residues Ile-19, Arg-20, Gly-61, Lys-64, Thr-65, Thr-66, 127-129 (EDF), Arg-170, Tyr-180, and Arg-217 each bind ATP. Thr-65 contributes to the Mg(2+) binding site. Residues 181–251 (SFEELVNIIK…VADSVLLKLG (71 aa)) are small ATPAse domain (RuvB-S). The interval 254 to 326 (KMGLNKLDMN…QAKEYLSFQH (73 aa)) is head domain (RuvB-H). Residues Arg-307 and Arg-312 each contribute to the DNA site.

The protein belongs to the RuvB family. Homohexamer. Forms an RuvA(8)-RuvB(12)-Holliday junction (HJ) complex. HJ DNA is sandwiched between 2 RuvA tetramers; dsDNA enters through RuvA and exits via RuvB. An RuvB hexamer assembles on each DNA strand where it exits the tetramer. Each RuvB hexamer is contacted by two RuvA subunits (via domain III) on 2 adjacent RuvB subunits; this complex drives branch migration. In the full resolvosome a probable DNA-RuvA(4)-RuvB(12)-RuvC(2) complex forms which resolves the HJ.

Its subcellular location is the cytoplasm. It catalyses the reaction ATP + H2O = ADP + phosphate + H(+). Its function is as follows. The RuvA-RuvB-RuvC complex processes Holliday junction (HJ) DNA during genetic recombination and DNA repair, while the RuvA-RuvB complex plays an important role in the rescue of blocked DNA replication forks via replication fork reversal (RFR). RuvA specifically binds to HJ cruciform DNA, conferring on it an open structure. The RuvB hexamer acts as an ATP-dependent pump, pulling dsDNA into and through the RuvAB complex. RuvB forms 2 homohexamers on either side of HJ DNA bound by 1 or 2 RuvA tetramers; 4 subunits per hexamer contact DNA at a time. Coordinated motions by a converter formed by DNA-disengaged RuvB subunits stimulates ATP hydrolysis and nucleotide exchange. Immobilization of the converter enables RuvB to convert the ATP-contained energy into a lever motion, pulling 2 nucleotides of DNA out of the RuvA tetramer per ATP hydrolyzed, thus driving DNA branch migration. The RuvB motors rotate together with the DNA substrate, which together with the progressing nucleotide cycle form the mechanistic basis for DNA recombination by continuous HJ branch migration. Branch migration allows RuvC to scan DNA until it finds its consensus sequence, where it cleaves and resolves cruciform DNA. This chain is Holliday junction branch migration complex subunit RuvB, found in Wolbachia pipientis wMel.